The sequence spans 204 residues: Large ribosomal subunit protein uL10 (204 aa).

The tract at residues 170-204 (AADPSVIGGAGEASDQEPKTTETPEASAAQDNTNE) is disordered. The span at 192 to 204 (TPEASAAQDNTNE) shows a compositional bias: polar residues.

This sequence belongs to the universal ribosomal protein uL10 family. Part of the ribosomal stalk of the 50S ribosomal subunit. The N-terminus interacts with L11 and the large rRNA to form the base of the stalk. The C-terminus forms an elongated spine to which L12 dimers bind in a sequential fashion forming a multimeric L10(L12)X complex.

In terms of biological role, forms part of the ribosomal stalk, playing a central role in the interaction of the ribosome with GTP-bound translation factors. This chain is Large ribosomal subunit protein uL10, found in Cutibacterium acnes (strain DSM 16379 / KPA171202) (Propionibacterium acnes).